The following is a 146-amino-acid chain: MRQTTILNSTKVEKKWYVIDAQGLVLGRLASKVAMILRGKNKPSYTPHVDCGDNVIILNADKINLSGNKLKGKMYYHHSQHPGGLKRTTAKNMLVKKPIYPVEHAIKGMLPKNKLGSKLFRNLFVYAGNEHPHEAQQPIKLELTNK.

The protein belongs to the universal ribosomal protein uL13 family. As to quaternary structure, part of the 50S ribosomal subunit.

This protein is one of the early assembly proteins of the 50S ribosomal subunit, although it is not seen to bind rRNA by itself. It is important during the early stages of 50S assembly. This Spiroplasma citri protein is Large ribosomal subunit protein uL13.